A 207-amino-acid chain; its full sequence is Guanylate kinase (207 aa).

One can recognise a Guanylate kinase-like domain in the interval 4 to 184 (GILFIISAPS…AVNDLITIIT (181 aa)). ATP is bound at residue 11 to 18 (APSGTGKS).

Belongs to the guanylate kinase family.

The protein resides in the cytoplasm. The enzyme catalyses GMP + ATP = GDP + ADP. In terms of biological role, essential for recycling GMP and indirectly, cGMP. This Buchnera aphidicola subsp. Acyrthosiphon pisum (strain APS) (Acyrthosiphon pisum symbiotic bacterium) protein is Guanylate kinase (gmk).